A 1035-amino-acid chain; its full sequence is Cell-division control histidine kinase PdhS (1035 aa).

The important for polar localization stretch occupies residues 1-613 (MSGSYPFIDI…HADGSEEPVD (613 aa)). The segment at 500–533 (QGLANTRAESETPVSETSSIEPVEPTPPVKTRSE) is disordered. The tract at residues 614–1035 (AHLNAIAWRG…VFPPTRVLAD (422 aa)) is interaction with DivK. Residues 659 to 730 (HVEELKTILD…YLHGLSGNGV (72 aa)) enclose the PAS domain. Residues 802–1031 (RISHEIRTPL…VVEIVFPPTR (230 aa)) enclose the Histidine kinase domain. A Phosphohistidine; by autocatalysis modification is found at H805.

As to quaternary structure, interacts with DivK.

It is found in the cytoplasm. It carries out the reaction ATP + protein L-histidine = ADP + protein N-phospho-L-histidine.. In terms of biological role, functions as a polar differentiation marker. Essential protein that, by localizing in the old pole of dividing cells, controls cell division and maturation, probably through control of DivK phosphorylation status and cellular distribution, which in turn regulates CtrA, a transcriptional regulator of the minB operon. The asymmetrical localization of this protein is probably required for cells to enter a new division cycle. The polypeptide is Cell-division control histidine kinase PdhS (pdhS) (Brucella suis biovar 1 (strain 1330)).